We begin with the raw amino-acid sequence, 309 residues long: tRNA dimethylallyltransferase (309 aa).

10-17 (GPTAVGKT) provides a ligand contact to ATP. 12 to 17 (TAVGKT) lines the substrate pocket. Residues 35 to 38 (DSMQ) form an interaction with substrate tRNA region.

The protein belongs to the IPP transferase family. In terms of assembly, monomer. Mg(2+) is required as a cofactor.

It catalyses the reaction adenosine(37) in tRNA + dimethylallyl diphosphate = N(6)-dimethylallyladenosine(37) in tRNA + diphosphate. Catalyzes the transfer of a dimethylallyl group onto the adenine at position 37 in tRNAs that read codons beginning with uridine, leading to the formation of N6-(dimethylallyl)adenosine (i(6)A). This chain is tRNA dimethylallyltransferase, found in Clostridium botulinum (strain Eklund 17B / Type B).